The primary structure comprises 417 residues: Glutamyl-tRNA reductase (417 aa).

Residues 49 to 52 (TCNR), S105, 110 to 112 (ETQ), and Q116 contribute to the substrate site. The active-site Nucleophile is C50. Residue 185–190 (GAGEMI) coordinates NADP(+).

The protein belongs to the glutamyl-tRNA reductase family. As to quaternary structure, homodimer.

It carries out the reaction (S)-4-amino-5-oxopentanoate + tRNA(Glu) + NADP(+) = L-glutamyl-tRNA(Glu) + NADPH + H(+). It functions in the pathway porphyrin-containing compound metabolism; protoporphyrin-IX biosynthesis; 5-aminolevulinate from L-glutamyl-tRNA(Glu): step 1/2. In terms of biological role, catalyzes the NADPH-dependent reduction of glutamyl-tRNA(Glu) to glutamate 1-semialdehyde (GSA). This is Glutamyl-tRNA reductase from Chromobacterium violaceum (strain ATCC 12472 / DSM 30191 / JCM 1249 / CCUG 213 / NBRC 12614 / NCIMB 9131 / NCTC 9757 / MK).